A 192-amino-acid polypeptide reads, in one-letter code: UPF0301 protein Bphyt_0868 (192 aa).

This sequence belongs to the UPF0301 (AlgH) family.

This is UPF0301 protein Bphyt_0868 from Paraburkholderia phytofirmans (strain DSM 17436 / LMG 22146 / PsJN) (Burkholderia phytofirmans).